The chain runs to 159 residues: Transcriptional repressor NrdR (159 aa).

A zinc finger spans residues 3–34 (CPFCRHDDTQVVDSRVSEDGAAIRRRRRCSAC). Positions 49–139 (PAVVKKDGSR…VYRRFEDVSE (91 aa)) constitute an ATP-cone domain.

The protein belongs to the NrdR family. Zn(2+) is required as a cofactor.

In terms of biological role, negatively regulates transcription of bacterial ribonucleotide reductase nrd genes and operons by binding to NrdR-boxes. The sequence is that of Transcriptional repressor NrdR from Burkholderia pseudomallei (strain 1106a).